Reading from the N-terminus, the 157-residue chain is MSKPVILTYEGLKKLEEELEYLKTVKRAEVAEKIKQARAFGDLSENSEYDEAKNEQAFIEGRIATLEAMLKNAKVIDEEDIKLDQVSIGCTVKVYDESYNEEVEYTIVGSAEADPMNNKISDESPIGKALLGKKVGDVVSVEVPAGIIKLKILEIRK.

Positions 12–74 (LKKLEEELEY…TLEAMLKNAK (63 aa)) form a coiled coil.

The protein belongs to the GreA/GreB family.

Its function is as follows. Necessary for efficient RNA polymerase transcription elongation past template-encoded arresting sites. The arresting sites in DNA have the property of trapping a certain fraction of elongating RNA polymerases that pass through, resulting in locked ternary complexes. Cleavage of the nascent transcript by cleavage factors such as GreA or GreB allows the resumption of elongation from the new 3'terminus. GreA releases sequences of 2 to 3 nucleotides. In Thermoanaerobacter pseudethanolicus (strain ATCC 33223 / 39E) (Clostridium thermohydrosulfuricum), this protein is Transcription elongation factor GreA.